We begin with the raw amino-acid sequence, 130 residues long: Ribosome-binding factor A (130 aa).

This sequence belongs to the RbfA family. As to quaternary structure, monomer. Binds 30S ribosomal subunits, but not 50S ribosomal subunits or 70S ribosomes.

It localises to the cytoplasm. Functionally, one of several proteins that assist in the late maturation steps of the functional core of the 30S ribosomal subunit. Associates with free 30S ribosomal subunits (but not with 30S subunits that are part of 70S ribosomes or polysomes). Required for efficient processing of 16S rRNA. May interact with the 5'-terminal helix region of 16S rRNA. The chain is Ribosome-binding factor A from Flavobacterium psychrophilum (strain ATCC 49511 / DSM 21280 / CIP 103535 / JIP02/86).